The following is a 1615-amino-acid chain: Ferredoxin-dependent glutamate synthase, chloroplastic (1615 aa).

Residues 1–52 (MATLPRAAAAAAPSPAAALLPLPRAAPLLAGRAAARSAARRLRARGTRAPPL) constitute a chloroplast transit peptide. The active-site Nucleophile is Cys97. A Glutamine amidotransferase type-2 domain is found at 97-496 (CGVGFVANLK…PGMMITVDLQ (400 aa)). 1175-1232 (LSETHQTLIQNGLRERVVLRVDGGFRSGLDVLMAAAMGADEYGFGSVAMIATGCVMAR) contributes to the FMN binding site. [3Fe-4S] cluster-binding residues include Cys1228, Cys1234, and Cys1239.

It belongs to the glutamate synthase family. The cofactor is [3Fe-4S] cluster. It depends on FAD as a cofactor. FMN is required as a cofactor. As to expression, expressed in leaf blades and at lower levels in roots.

The protein resides in the plastid. The protein localises to the chloroplast. The catalysed reaction is 2 oxidized [2Fe-2S]-[ferredoxin] + 2 L-glutamate = L-glutamine + 2 reduced [2Fe-2S]-[ferredoxin] + 2-oxoglutarate + 2 H(+). The protein operates within amino-acid biosynthesis; L-glutamate biosynthesis via GLT pathway; L-glutamate from 2-oxoglutarate and L-glutamine (ferredoxin route): step 1/1. Its pathway is energy metabolism; nitrogen metabolism. Functionally, involved in glutamate biosynthesis in leaf. Required for the reassimilation of ammonium ions generated during photorespiration. In Oryza sativa subsp. japonica (Rice), this protein is Ferredoxin-dependent glutamate synthase, chloroplastic (GLU).